Here is a 105-residue protein sequence, read N- to C-terminus: Thioredoxin (105 aa).

In terms of domain architecture, Thioredoxin spans methionine 1–isoleucine 105. A disulfide bridge links cysteine 30 with cysteine 33.

The protein belongs to the thioredoxin family.

In terms of biological role, component of the thioredoxin-thioredoxin reductase system. Participates in various redox reactions through the reversible oxidation of its active center dithiol to a disulfide and catalyzes dithiol-disulfide exchange reactions. The chain is Thioredoxin (trxA) from Rickettsia typhi (strain ATCC VR-144 / Wilmington).